Here is a 377-residue protein sequence, read N- to C-terminus: tRNA-specific 2-thiouridylase MnmA (377 aa).

Residues glycine 8–serine 15 and methionine 34 contribute to the ATP site. The interval asparagine 94–aspartate 96 is interaction with target base in tRNA. Cysteine 99 (nucleophile) is an active-site residue. Cysteines 99 and 201 form a disulfide. Residue glycine 123 coordinates ATP. An interaction with tRNA region spans residues lysine 151–glutamine 153. Residue cysteine 201 is the Cysteine persulfide intermediate of the active site. The segment at arginine 315–tyrosine 316 is interaction with tRNA.

The protein belongs to the MnmA/TRMU family.

The protein resides in the cytoplasm. It carries out the reaction S-sulfanyl-L-cysteinyl-[protein] + uridine(34) in tRNA + AH2 + ATP = 2-thiouridine(34) in tRNA + L-cysteinyl-[protein] + A + AMP + diphosphate + H(+). In terms of biological role, catalyzes the 2-thiolation of uridine at the wobble position (U34) of tRNA, leading to the formation of s(2)U34. In Acinetobacter baumannii (strain AB307-0294), this protein is tRNA-specific 2-thiouridylase MnmA.